The chain runs to 54 residues: UPF0181 protein PM0480 (54 aa).

It belongs to the UPF0181 family.

The polypeptide is UPF0181 protein PM0480 (Pasteurella multocida (strain Pm70)).